A 1363-amino-acid chain; its full sequence is DNA-directed RNA polymerase subunit beta (1363 aa).

The protein belongs to the RNA polymerase beta chain family. In terms of assembly, the RNAP catalytic core consists of 2 alpha, 1 beta, 1 beta' and 1 omega subunit. When a sigma factor is associated with the core the holoenzyme is formed, which can initiate transcription.

The enzyme catalyses RNA(n) + a ribonucleoside 5'-triphosphate = RNA(n+1) + diphosphate. Its function is as follows. DNA-dependent RNA polymerase catalyzes the transcription of DNA into RNA using the four ribonucleoside triphosphates as substrates. In Syntrophus aciditrophicus (strain SB), this protein is DNA-directed RNA polymerase subunit beta.